Consider the following 302-residue polypeptide: Monopolin complex subunit MAM1 (302 aa).

2 disordered regions span residues Y53–V83 and T257–K276. Residues T257–T268 show a composition bias toward polar residues.

As to quaternary structure, component of the monopolin complex composed of at least CSM1, LRS4 and MAM1. The complex associates with the kinetochore during late pachytene. Post-translationally, phosphorylated by CDC5. This phosphorylation is required for the location to the kinetochores during late pachytene.

It localises to the nucleus. Its function is as follows. Component of the monopolin complex which promotes monoorientation during meiosis I, required for chromosome segregation during meiosis. This Saccharomyces cerevisiae (strain ATCC 204508 / S288c) (Baker's yeast) protein is Monopolin complex subunit MAM1 (MAM1).